Consider the following 288-residue polypeptide: Bifunctional protein FolD (288 aa).

NADP(+)-binding positions include 166-168 (GAS) and Ile-232.

Belongs to the tetrahydrofolate dehydrogenase/cyclohydrolase family. As to quaternary structure, homodimer.

It carries out the reaction (6R)-5,10-methylene-5,6,7,8-tetrahydrofolate + NADP(+) = (6R)-5,10-methenyltetrahydrofolate + NADPH. The catalysed reaction is (6R)-5,10-methenyltetrahydrofolate + H2O = (6R)-10-formyltetrahydrofolate + H(+). It functions in the pathway one-carbon metabolism; tetrahydrofolate interconversion. In terms of biological role, catalyzes the oxidation of 5,10-methylenetetrahydrofolate to 5,10-methenyltetrahydrofolate and then the hydrolysis of 5,10-methenyltetrahydrofolate to 10-formyltetrahydrofolate. In Erwinia tasmaniensis (strain DSM 17950 / CFBP 7177 / CIP 109463 / NCPPB 4357 / Et1/99), this protein is Bifunctional protein FolD.